The sequence spans 445 residues: uncharacterized protein (445 aa).

Histidine 66 serves as a coordination point for Zn(2+). Catalysis depends on glutamate 69, which acts as the Proton acceptor. Positions 70 and 146 each coordinate Zn(2+). Positions 232-251 (GRQSAPPRKSTGRINGGPAL) are disordered.

It belongs to the peptidase M16 family. It depends on Zn(2+) as a cofactor.

This is an uncharacterized protein from Mycobacterium leprae (strain TN).